A 257-amino-acid chain; its full sequence is ATP synthase subunit a (257 aa).

Positions 1 to 8 are cleaved as a propeptide — removed in mature form; that stretch reads MRHLDFVL. 7 helical membrane-spanning segments follow: residues 34–54, 93–113, 122–142, 149–169, 187–207, 210–230, and 231–251; these read LTNI…YSLL, FFPL…IGLV, HFIL…ILGF, FFSL…LVLI, ANIL…YNIM, GIIF…FSGL, and ELAI…SYIK.

This sequence belongs to the ATPase A chain family. F-type ATPases have 2 components, CF(1) - the catalytic core - and CF(0) - the membrane proton channel. CF(1) has five subunits: alpha(3), beta(3), gamma(1), delta(1), epsilon(1). CF(0) has three main subunits: a, b and c.

It is found in the mitochondrion inner membrane. Functionally, mitochondrial membrane ATP synthase (F(1)F(0) ATP synthase or Complex V) produces ATP from ADP in the presence of a proton gradient across the membrane which is generated by electron transport complexes of the respiratory chain. F-type ATPases consist of two structural domains, F(1) - containing the extramembraneous catalytic core and F(0) - containing the membrane proton channel, linked together by a central stalk and a peripheral stalk. During catalysis, ATP synthesis in the catalytic domain of F(1) is coupled via a rotary mechanism of the central stalk subunits to proton translocation. Key component of the proton channel; it may play a direct role in the translocation of protons across the membrane. This is ATP synthase subunit a (atp6) from Penicillium chrysogenum (Penicillium notatum).